The following is a 338-amino-acid chain: Formamidase (338 aa).

The CN hydrolase domain maps to 15–257 (VVIGLAQLAL…DEIVCCELRP (243 aa)). The active-site Proton acceptor is Glu61. The active-site Proton donor is the Lys130. Cys163 functions as the Nucleophile in the catalytic mechanism.

This sequence belongs to the carbon-nitrogen hydrolase superfamily. Aliphatic amidase family.

It catalyses the reaction formamide + H2O = formate + NH4(+). Functionally, is an aliphatic amidase with a restricted substrate specificity, as it only hydrolyzes formamide. The sequence is that of Formamidase from Pseudomonas syringae pv. syringae (strain B728a).